Consider the following 295-residue polypeptide: MTSTDSSQATSDRYVVIGNPVAHSRSPAIHAAFARQTGEAVQYDRLEAPLDGFADAVRQFFAEGGYGCNVTVPFKLEAYDLADRLTERAEAAGAVNTLWIEEGLIHGDNTDGIGLVRDIQDNLDTLIEGKRVLLLGAGGAAMGAMLPLIECRPSRIVVANRTASRASDMLEEFVEAADQYGVELWGGGLDALDGLSEDEAVDVVINASSSSLHGEVPPVPEFLLGEGVLAYDMMYGAEPTVFLQFAARCGARTSDGLGMLVEQAAEAFYIWRGVRPRTAPVLAELRAALQAERKG.

Residues 24–26 (SRS) and threonine 71 contribute to the shikimate site. Lysine 75 (proton acceptor) is an active-site residue. An NADP(+)-binding site is contributed by glutamate 87. Positions 96 and 111 each coordinate shikimate. Residues 136 to 140 (GAGGA), 160 to 165 (NRTASR), and methionine 233 each bind NADP(+). Tyrosine 235 contacts shikimate. NADP(+) is bound at residue glycine 256.

It belongs to the shikimate dehydrogenase family. In terms of assembly, homodimer.

It catalyses the reaction shikimate + NADP(+) = 3-dehydroshikimate + NADPH + H(+). It functions in the pathway metabolic intermediate biosynthesis; chorismate biosynthesis; chorismate from D-erythrose 4-phosphate and phosphoenolpyruvate: step 4/7. In terms of biological role, involved in the biosynthesis of the chorismate, which leads to the biosynthesis of aromatic amino acids. Catalyzes the reversible NADPH linked reduction of 3-dehydroshikimate (DHSA) to yield shikimate (SA). The protein is Shikimate dehydrogenase (NADP(+)) of Cupriavidus necator (strain ATCC 17699 / DSM 428 / KCTC 22496 / NCIMB 10442 / H16 / Stanier 337) (Ralstonia eutropha).